We begin with the raw amino-acid sequence, 699 residues long: Elongation factor G (699 aa).

The region spanning Glu-8–Ile-283 is the tr-type G domain. GTP is bound by residues Ala-17–Thr-24, Asp-81–His-85, and Asn-135–Asp-138.

It belongs to the TRAFAC class translation factor GTPase superfamily. Classic translation factor GTPase family. EF-G/EF-2 subfamily.

It is found in the cytoplasm. Functionally, catalyzes the GTP-dependent ribosomal translocation step during translation elongation. During this step, the ribosome changes from the pre-translocational (PRE) to the post-translocational (POST) state as the newly formed A-site-bound peptidyl-tRNA and P-site-bound deacylated tRNA move to the P and E sites, respectively. Catalyzes the coordinated movement of the two tRNA molecules, the mRNA and conformational changes in the ribosome. This is Elongation factor G from Rickettsia parkeri.